Here is a 361-residue protein sequence, read N- to C-terminus: Protein RecA (361 aa).

77–84 lines the ATP pocket; that stretch reads GPESSGKT.

This sequence belongs to the RecA family.

The protein resides in the cytoplasm. Its function is as follows. Can catalyze the hydrolysis of ATP in the presence of single-stranded DNA, the ATP-dependent uptake of single-stranded DNA by duplex DNA, and the ATP-dependent hybridization of homologous single-stranded DNAs. It interacts with LexA causing its activation and leading to its autocatalytic cleavage. The chain is Protein RecA from Brucella anthropi (strain ATCC 49188 / DSM 6882 / CCUG 24695 / JCM 21032 / LMG 3331 / NBRC 15819 / NCTC 12168 / Alc 37) (Ochrobactrum anthropi).